Reading from the N-terminus, the 349-residue chain is Farnesyl pyrophosphate synthase (349 aa).

The isopentenyl diphosphate site is built by K48, R51, and Q90. 2 residues coordinate Mg(2+): D97 and D101. R106 contributes to the dimethylallyl diphosphate binding site. An isopentenyl diphosphate-binding site is contributed by R107. Dimethylallyl diphosphate contacts are provided by K194, T195, Q234, K251, and K260.

This sequence belongs to the FPP/GGPP synthase family. Requires Mg(2+) as cofactor.

It is found in the cytoplasm. The enzyme catalyses isopentenyl diphosphate + dimethylallyl diphosphate = (2E)-geranyl diphosphate + diphosphate. It catalyses the reaction isopentenyl diphosphate + (2E)-geranyl diphosphate = (2E,6E)-farnesyl diphosphate + diphosphate. It participates in isoprenoid biosynthesis; farnesyl diphosphate biosynthesis; farnesyl diphosphate from geranyl diphosphate and isopentenyl diphosphate: step 1/1. The protein operates within isoprenoid biosynthesis; geranyl diphosphate biosynthesis; geranyl diphosphate from dimethylallyl diphosphate and isopentenyl diphosphate: step 1/1. Functionally, catalyzes the sequential condensation of isopentenyl pyrophosphate with the allylic pyrophosphates, dimethylallyl pyrophosphate, and then with the resultant geranylpyrophosphate to the ultimate product farnesyl pyrophosphate. The chain is Farnesyl pyrophosphate synthase (FPS1) from Kluyveromyces lactis (strain ATCC 8585 / CBS 2359 / DSM 70799 / NBRC 1267 / NRRL Y-1140 / WM37) (Yeast).